A 305-amino-acid chain; its full sequence is Glycine--tRNA ligase alpha subunit (305 aa).

The protein belongs to the class-II aminoacyl-tRNA synthetase family. As to quaternary structure, tetramer of two alpha and two beta subunits.

Its subcellular location is the cytoplasm. The catalysed reaction is tRNA(Gly) + glycine + ATP = glycyl-tRNA(Gly) + AMP + diphosphate. In Streptococcus pyogenes serotype M49 (strain NZ131), this protein is Glycine--tRNA ligase alpha subunit.